A 115-amino-acid chain; its full sequence is Evasin P1182 (115 aa).

The first 26 residues, 1–26 (MALNWSFRVIFVSTMWCALLKFATLG), serve as a signal peptide directing secretion. 4 disulfide bridges follow: C38-C58, C54-C94, C70-C99, and C89-C108. N45, N72, and N103 each carry an N-linked (GlcNAc...) asparagine glycan.

It localises to the secreted. Functionally, salivary chemokine-binding protein which binds to host chemokines CCL2, CCL3, CCL4, CCL8 and CCL18. The chain is Evasin P1182 from Amblyomma maculatum (Gulf Coast tick).